Here is a 404-residue protein sequence, read N- to C-terminus: MHELIKYQFNTRRKKYGTGAALSLLNGNVGHEVLAFHKKLPNYAVTPLHNLAHLSQRLGLGSIHIKDESWRFGLNAFKGLGGSYAVGKYLADKLQCDINSLSFAALNTPEIKEKIKDCVFVTATDGNHGRGVAWAAEQLGLKAVVYMPKGSSLIRAENIRHHGAECTITDLNYDDAVRLAHRMAQTKGWVLLQDTAWTGYEEIPTWIMQGYMTLAVEAYEQLAETNSPLPTHLILQAGVGSFAGSVMGYFVEKMQENIPNIIVVEPHQANCLYQSAVMDDGQPHCVTGDMATIMAGLACGEPNIISWPIIRDNTSCFISADDCLAAKGMRISAAPRPGTDTPFISGESGAIGVGLLYELMNNMHYQDLANRLQLDASAHVLLISTEGDTSPDIYEDIVWNGRSA.

N6-(pyridoxal phosphate)lysine is present on Lys-78.

The protein belongs to the diaminopropionate ammonia-lyase family. In terms of assembly, homodimer. Pyridoxal 5'-phosphate serves as cofactor.

It carries out the reaction (S)-2,3-diaminopropanoate + H2O + H(+) = pyruvate + 2 NH4(+). It catalyses the reaction (R)-2,3-diaminopropanoate + H2O + H(+) = pyruvate + 2 NH4(+). Competitively inhibited by L- and D-alanine. Functionally, catalyzes the alpha,beta-elimination reaction of both L- and D-alpha,beta-diaminopropionate (DAP) to form pyruvate and ammonia. In vitro L- and D-isomers of serine are also degraded, though slowly; it is the only serine dehydratase which can eliminate an amino group at the beta-carbon position. In vivo L-, D- and a mixure of DL-DAP allow growth. DL-DAP is toxic in the absence of this enzyme, it may inhibit enzymes involved in the synthesis of pyruvate and aspartate, as well as amino acids derived from them. This Salmonella typhimurium (strain LT2 / SGSC1412 / ATCC 700720) protein is Diaminopropionate ammonia-lyase (dpaL).